A 374-amino-acid chain; its full sequence is NADH-quinone oxidoreductase subunit D 1 (374 aa).

The protein belongs to the complex I 49 kDa subunit family. In terms of assembly, NDH-1 is composed of 14 different subunits. Subunits NuoB, C, D, E, F, and G constitute the peripheral sector of the complex.

It localises to the cell membrane. It catalyses the reaction a quinone + NADH + 5 H(+)(in) = a quinol + NAD(+) + 4 H(+)(out). NDH-1 shuttles electrons from NADH, via FMN and iron-sulfur (Fe-S) centers, to quinones in the respiratory chain. The immediate electron acceptor for the enzyme in this species is believed to be ubiquinone. Couples the redox reaction to proton translocation (for every two electrons transferred, four hydrogen ions are translocated across the cytoplasmic membrane), and thus conserves the redox energy in a proton gradient. This chain is NADH-quinone oxidoreductase subunit D 1, found in Roseiflexus sp. (strain RS-1).